Here is a 237-residue protein sequence, read N- to C-terminus: Phosphoadenosine 5'-phosphosulfate reductase (237 aa).

Catalysis depends on Cys231, which acts as the Nucleophile; cysteine thiosulfonate intermediate.

It belongs to the PAPS reductase family. CysH subfamily.

It is found in the cytoplasm. It catalyses the reaction [thioredoxin]-disulfide + sulfite + adenosine 3',5'-bisphosphate + 2 H(+) = [thioredoxin]-dithiol + 3'-phosphoadenylyl sulfate. Its pathway is sulfur metabolism; hydrogen sulfide biosynthesis; sulfite from sulfate: step 3/3. Its function is as follows. Catalyzes the formation of sulfite from phosphoadenosine 5'-phosphosulfate (PAPS) using thioredoxin as an electron donor. The protein is Phosphoadenosine 5'-phosphosulfate reductase of Xylella fastidiosa (strain M12).